Here is a 399-residue protein sequence, read N- to C-terminus: Nitric oxide reductase (399 aa).

The segment at 32 to 221 is zinc metallo-hydrolase; that stretch reads HRGTTYNAYL…DEIQKINLAI (190 aa). Fe cation is bound by residues histidine 81, glutamate 83, aspartate 85, histidine 148, aspartate 167, and histidine 228. The Flavodoxin-like domain maps to 255 to 394; that stretch reads AVIAYDTMWL…RCYELGRKIA (140 aa).

It in the N-terminal section; belongs to the zinc metallo-hydrolase group 3 family. In terms of assembly, homodimer. It depends on FMN as a cofactor. The cofactor is Fe cation.

Its function is as follows. Has nitric oxide reductase activity in combination with Hrb; probably involved in nitrosative stress protection. This Moorella thermoacetica (strain ATCC 39073 / JCM 9320) protein is Nitric oxide reductase (fprA).